A 204-amino-acid chain; its full sequence is Large ribosomal subunit protein uL4 (204 aa).

Positions 49 to 75 (TKGRSDVSGGGKKPWRQKGRGGARAGS) are disordered.

Belongs to the universal ribosomal protein uL4 family. Part of the 50S ribosomal subunit.

One of the primary rRNA binding proteins, this protein initially binds near the 5'-end of the 23S rRNA. It is important during the early stages of 50S assembly. It makes multiple contacts with different domains of the 23S rRNA in the assembled 50S subunit and ribosome. Functionally, forms part of the polypeptide exit tunnel. The chain is Large ribosomal subunit protein uL4 from Campylobacter lari (strain RM2100 / D67 / ATCC BAA-1060).